Reading from the N-terminus, the 484-residue chain is Serine protease HTR4 (484 aa).

An N-terminal signal peptide occupies residues Met-1 to Gly-28. In terms of domain architecture, IGFBP N-terminal spans Pro-36–Pro-114. 8 disulfide bridges follow: Cys-40–Cys-66, Cys-44–Cys-68, Cys-49–Cys-69, Cys-55–Cys-72, Cys-80–Cys-94, Cys-88–Cys-111, Cys-113–Cys-132, and Cys-121–Cys-157. A Kazal-like domain is found at Gly-105–Asp-159. Residues Ala-209 to Leu-369 form a serine protease region. Catalysis depends on charge relay system residues His-225, Asp-255, and Ser-333. The 83-residue stretch at Leu-390 to Gln-472 folds into the PDZ domain.

The protein belongs to the peptidase S1C family.

It localises to the secreted. Functionally, serine protease. The polypeptide is Serine protease HTR4 (HTRA4) (Bos taurus (Bovine)).